A 1049-amino-acid polypeptide reads, in one-letter code: Isoleucine--tRNA ligase (1049 aa).

A 'HIGH' region motif is present at residues 48–59 (PYPSSPTPHIGT). Residues 597 to 601 (EMHKS) carry the 'KMSKS' region motif. ATP is bound at residue K600.

Belongs to the class-I aminoacyl-tRNA synthetase family. IleS type 2 subfamily. As to quaternary structure, monomer. It depends on Zn(2+) as a cofactor.

It localises to the cytoplasm. The enzyme catalyses tRNA(Ile) + L-isoleucine + ATP = L-isoleucyl-tRNA(Ile) + AMP + diphosphate. Functionally, catalyzes the attachment of isoleucine to tRNA(Ile). As IleRS can inadvertently accommodate and process structurally similar amino acids such as valine, to avoid such errors it has two additional distinct tRNA(Ile)-dependent editing activities. One activity is designated as 'pretransfer' editing and involves the hydrolysis of activated Val-AMP. The other activity is designated 'posttransfer' editing and involves deacylation of mischarged Val-tRNA(Ile). The protein is Isoleucine--tRNA ligase of Saccharolobus islandicus (strain M.16.27) (Sulfolobus islandicus).